Reading from the N-terminus, the 253-residue chain is CD151 antigen (253 aa).

Over 1–18 (MGEFNEKKTTCGTVCLKY) the chain is Cytoplasmic. Residues C11 and C15 are each lipidated (S-palmitoyl cysteine). A helical transmembrane segment spans residues 19–39 (LLFTYNCCFWLAGLAVMAVGI). Topologically, residues 40–57 (WTLALKSDYISLLASGTY) are extracellular. Residues 58–78 (LATAYILVVAGAVVMVTGVLG) form a helical membrane-spanning segment. Residues 79-91 (CCATFKERRNLLR) lie on the Cytoplasmic side of the membrane. A helical membrane pass occupies residues 92–112 (LYFILLLIIFLLEIIAGVLAY). Over 113–221 (VYYQQLNTEL…LETFIQEHLR (109 aa)) the chain is Extracellular. Residue N159 is glycosylated (N-linked (GlcNAc...) asparagine). A helical transmembrane segment spans residues 222 to 242 (VIGAVGTGIACVQVFGMIFTC). Residues C242 and C243 are each lipidated (S-palmitoyl cysteine). The Cytoplasmic segment spans residues 243-253 (CLYRSLKLEHY).

Belongs to the tetraspanin (TM4SF) family. Interacts with integrins ITGA3:ITGB1, ITGA5:ITGB1, ITGA3:ITGB1 and ITGA6:ITGB4 and with CD9 and CD181. Interacts (via the second extracellular domain) with integrin ITGAV:ITGB3. Interacts with ITGA3; this interaction modulates ITGA3 glycosylation pattern. Interacts with F11R. Interacts with RAC1 and CDC42; these interactions mediate physical association of RAC1 and CDC42 with integrin adhesion receptor complexes. Palmitoylated. Palmitoylation by ZDHHC2 regulates CD151 expression, association with other tetraspanin family proteins and function in cell adhesion. Post-translationally, ubiquitinated by RNF128 on lysine residues present in the tetraspanin amino terminus via 'Lys-48'-linked ubiquitin leading to proteasomal degradation.

The protein localises to the cell membrane. Functionally, structural component of specialized membrane microdomains known as tetraspanin-enriched microdomains (TERMs), which act as platforms for receptor clustering and signaling. Plays a role in various cellular and molecular mechanism through its association with both integrin and non-integrin proteins. These interactions facilitate critical cellular functions, including cell-to-cell communication, wound healing, platelet aggregation, trafficking, cell motility, and angiogenesis. Via interaction with JAM-A/F11R and integrin ITGA3:ITGB1, promotes the recruitment of signaling molecules such as RAC1, CDC42 and RhoGTPases to facilitate the polarization of epithelial cells and the reorganization of the actin cytoskeleton, which are critical steps in cell migration process. Regulates the glycosylation pattern of ITGA3:ITGB1 thereby modulating its activity. Plays an essential role in the maintenance of central laminin-binding integrin ITGA6:ITGB4-containing adhesion complexes. Essential for the proper assembly of the glomerular and tubular basement membranes in kidney. Contributes to T-cell activation by modulating integrin signaling leading to activation of downstream targets PTK2 and MAPK1/MAPK3. The protein is CD151 antigen (CD151) of Chlorocebus aethiops (Green monkey).